Reading from the N-terminus, the 255-residue chain is UPF0246 protein DP0358 (255 aa).

This sequence belongs to the UPF0246 family.

The sequence is that of UPF0246 protein DP0358 from Desulfotalea psychrophila (strain LSv54 / DSM 12343).